Consider the following 266-residue polypeptide: Methylsterol monooxygenase 2-2 (266 aa).

3 helical membrane-spanning segments follow: residues 24–44 (IGSF…FIFL), 71–91 (RLLL…YPVF), and 107–127 (EVSA…YWGH). Residues 113–247 (LFYFIIEDFV…FVYMDWIFGT (135 aa)) enclose the Fatty acid hydroxylase domain. A Histidine box-1 motif is present at residues 127–131 (HRILH). Positions 140 to 144 (HSVHH) match the Histidine box-2 motif. A helical transmembrane segment spans residues 162 to 182 (ILFLGFATIVGPALTGPHLIT). The short motif at 219–225 (FHDYHHR) is the Histidine box-3 element.

This sequence belongs to the sterol desaturase family. The cofactor is Fe cation. In terms of tissue distribution, expressed in shoots, roots, siliques and flowers, and, slightly, in developing seeds.

Its subcellular location is the endoplasmic reticulum membrane. The enzyme catalyses 4,4-dimethyl-5alpha-cholest-7-en-3beta-ol + 6 Fe(II)-[cytochrome b5] + 3 O2 + 5 H(+) = 4alpha-carboxy-4beta-methyl-5alpha-cholest-7-ene-3beta-ol + 6 Fe(III)-[cytochrome b5] + 4 H2O. The catalysed reaction is 24-methylidenelophenol + 6 Fe(II)-[cytochrome b5] + 3 O2 + 5 H(+) = 4alpha-carboxy-ergosta-7,24(24(1))-dien-3beta-ol + 6 Fe(III)-[cytochrome b5] + 4 H2O. Non-heme iron oxygenase involved in sterols biosynthesis by catalyzing the removal of the second methyl group at the C-4 position. 24-ethylidenelophenol and 24-ethyllophenol are the preferred substrates. Together with SMO2-1, required during embryogenesis, probably by maintaining sterols and auxin homeostasis. This Arabidopsis thaliana (Mouse-ear cress) protein is Methylsterol monooxygenase 2-2.